Reading from the N-terminus, the 234-residue chain is MKITWLGHSAFRIETGKAKILLDPFLNHNASFAGQDINDVSSGITHILLTHGHGDHVGDTVALAKETGAVVLANADLAAWLGSKGVDRIEMGNTGGTITLGGFSATFTNALHSSAQITEDGVSHALGNANGLMLHFDDEASIFAMGDTDIFSDMGLINELHQPDIGFVPVGDRFTMGGAVAALACQRYFSFKTAIPCHFGTFPIIDQTADKFIDGMEGSKTQVKALKPAESLSI.

It belongs to the UPF0173 family.

This is UPF0173 metal-dependent hydrolase RHECIAT_CH0001941 from Rhizobium etli (strain CIAT 652).